The sequence spans 473 residues: Bifunctional protein HldE (473 aa).

A ribokinase region spans residues methionine 1–proline 316. Asparagine 193–glutamate 196 serves as a coordination point for ATP. Aspartate 262 is an active-site residue. The cytidylyltransferase stretch occupies residues valine 342–glycine 473.

The protein in the N-terminal section; belongs to the carbohydrate kinase PfkB family. In the C-terminal section; belongs to the cytidylyltransferase family. Homodimer.

It catalyses the reaction D-glycero-beta-D-manno-heptose 7-phosphate + ATP = D-glycero-beta-D-manno-heptose 1,7-bisphosphate + ADP + H(+). The catalysed reaction is D-glycero-beta-D-manno-heptose 1-phosphate + ATP + H(+) = ADP-D-glycero-beta-D-manno-heptose + diphosphate. The protein operates within nucleotide-sugar biosynthesis; ADP-L-glycero-beta-D-manno-heptose biosynthesis; ADP-L-glycero-beta-D-manno-heptose from D-glycero-beta-D-manno-heptose 7-phosphate: step 1/4. It participates in nucleotide-sugar biosynthesis; ADP-L-glycero-beta-D-manno-heptose biosynthesis; ADP-L-glycero-beta-D-manno-heptose from D-glycero-beta-D-manno-heptose 7-phosphate: step 3/4. Catalyzes the phosphorylation of D-glycero-D-manno-heptose 7-phosphate at the C-1 position to selectively form D-glycero-beta-D-manno-heptose-1,7-bisphosphate. In terms of biological role, catalyzes the ADP transfer from ATP to D-glycero-beta-D-manno-heptose 1-phosphate, yielding ADP-D-glycero-beta-D-manno-heptose. The sequence is that of Bifunctional protein HldE from Methylococcus capsulatus (strain ATCC 33009 / NCIMB 11132 / Bath).